Here is a 153-residue protein sequence, read N- to C-terminus: MSHPAYELPIDVNQIQALIPHRYPFLLIDRVIELDLEAKRIVGQKNVSINEPFFQGHFPTRPVMPGVLIIEALAQAGGVMTQLGLGRDALSKLFYMVKVDNARFNKQVVPGDVLILEVQMKRLIRNMGCYYGEAKVNGEIVASAEIMCAAARE.

Histidine 57 is an active-site residue.

The protein belongs to the thioester dehydratase family. FabZ subfamily.

The protein resides in the cytoplasm. The enzyme catalyses a (3R)-hydroxyacyl-[ACP] = a (2E)-enoyl-[ACP] + H2O. Involved in unsaturated fatty acids biosynthesis. Catalyzes the dehydration of short chain beta-hydroxyacyl-ACPs and long chain saturated and unsaturated beta-hydroxyacyl-ACPs. This is 3-hydroxyacyl-[acyl-carrier-protein] dehydratase FabZ from Xanthomonas oryzae pv. oryzae (strain MAFF 311018).